The chain runs to 347 residues: Protein RecA (347 aa).

65–72 (GPESSGKT) is an ATP binding site.

Belongs to the RecA family.

The protein resides in the cytoplasm. In terms of biological role, can catalyze the hydrolysis of ATP in the presence of single-stranded DNA, the ATP-dependent uptake of single-stranded DNA by duplex DNA, and the ATP-dependent hybridization of homologous single-stranded DNAs. It interacts with LexA causing its activation and leading to its autocatalytic cleavage. The sequence is that of Protein RecA from Stutzerimonas stutzeri (Pseudomonas stutzeri).